The primary structure comprises 276 residues: Rhamnulose-1-phosphate aldolase (276 aa).

The active site involves Glu-117. 3 residues coordinate Zn(2+): His-141, His-143, and His-212.

It belongs to the aldolase class II family. RhaD subfamily. In terms of assembly, homotetramer. It depends on Zn(2+) as a cofactor.

The protein resides in the cytoplasm. The catalysed reaction is L-rhamnulose 1-phosphate = (S)-lactaldehyde + dihydroxyacetone phosphate. It functions in the pathway carbohydrate degradation; L-rhamnose degradation; glycerone phosphate from L-rhamnose: step 3/3. In terms of biological role, catalyzes the reversible cleavage of L-rhamnulose-1-phosphate to dihydroxyacetone phosphate (DHAP) and L-lactaldehyde. The polypeptide is Rhamnulose-1-phosphate aldolase (Klebsiella pneumoniae subsp. pneumoniae (strain ATCC 700721 / MGH 78578)).